A 161-amino-acid chain; its full sequence is Non-secretory ribonuclease (161 aa).

The N-terminal stretch at 1 to 27 (MVPKLFTSQICLLLLLGLMGVEGSLHA) is a signal peptide. C-linked (Man) tryptophan glycosylation occurs at Trp-34. His-42 functions as the Proton acceptor in the catalytic mechanism. N-linked (GlcNAc...) asparagine glycosylation occurs at Asn-44. 4 cysteine pairs are disulfide-bonded: Cys-50/Cys-110, Cys-64/Cys-123, Cys-82/Cys-138, and Cys-89/Cys-98. At Tyr-60 the chain carries 3'-nitrotyrosine. 65 to 69 (KNQNT) provides a ligand contact to substrate. N-linked (GlcNAc...) asparagine glycosylation is found at Asn-86, Asn-92, Asn-111, and Asn-119. The active-site Proton donor is the His-156.

It belongs to the pancreatic ribonuclease family. Interacts with and forms a tight 1:1 complex with RNH1. Dimerization of two such complexes may occur.

It is found in the lysosome. It localises to the cytoplasmic granule. The catalysed reaction is an [RNA] containing cytidine + H2O = an [RNA]-3'-cytidine-3'-phosphate + a 5'-hydroxy-ribonucleotide-3'-[RNA].. It carries out the reaction an [RNA] containing uridine + H2O = an [RNA]-3'-uridine-3'-phosphate + a 5'-hydroxy-ribonucleotide-3'-[RNA].. Functionally, this is a non-secretory ribonuclease. It is a pyrimidine specific nuclease with a slight preference for U. Cytotoxin and helminthotoxin. Possesses a wide variety of biological activities. This is Non-secretory ribonuclease (RNASE2) from Nomascus leucogenys (Northern white-cheeked gibbon).